A 547-amino-acid chain; its full sequence is Probable terpene synthase 3 (547 aa).

Residues Asp298, Asp302, and Glu451 each coordinate Mg(2+). The DDXXD motif signature appears at 298 to 302 (DDIYD).

This sequence belongs to the terpene synthase family. The cofactor is Mg(2+).

Its function is as follows. Probable sesquiterpene synthase. The chain is Probable terpene synthase 3 (TPS3) from Ricinus communis (Castor bean).